A 605-amino-acid polypeptide reads, in one-letter code: Elongation factor 4 (605 aa).

The region spanning 11–193 (KCIRNFSIIA…QIVTRISPPQ (183 aa)) is the tr-type G domain. GTP is bound by residues 23-28 (DHGKST) and 140-143 (NKVD).

Belongs to the TRAFAC class translation factor GTPase superfamily. Classic translation factor GTPase family. LepA subfamily.

Its subcellular location is the cell membrane. It carries out the reaction GTP + H2O = GDP + phosphate + H(+). In terms of biological role, required for accurate and efficient protein synthesis under certain stress conditions. May act as a fidelity factor of the translation reaction, by catalyzing a one-codon backward translocation of tRNAs on improperly translocated ribosomes. Back-translocation proceeds from a post-translocation (POST) complex to a pre-translocation (PRE) complex, thus giving elongation factor G a second chance to translocate the tRNAs correctly. Binds to ribosomes in a GTP-dependent manner. The polypeptide is Elongation factor 4 (Aster yellows witches'-broom phytoplasma (strain AYWB)).